Consider the following 142-residue polypeptide: Large ribosomal subunit protein uL11 (142 aa).

The protein belongs to the universal ribosomal protein uL11 family. Part of the ribosomal stalk of the 50S ribosomal subunit. Interacts with L10 and the large rRNA to form the base of the stalk. L10 forms an elongated spine to which L12 dimers bind in a sequential fashion forming a multimeric L10(L12)X complex. Post-translationally, one or more lysine residues are methylated.

Forms part of the ribosomal stalk which helps the ribosome interact with GTP-bound translation factors. This chain is Large ribosomal subunit protein uL11, found in Klebsiella pneumoniae subsp. pneumoniae (strain ATCC 700721 / MGH 78578).